Reading from the N-terminus, the 459-residue chain is Putrescine aminotransferase (459 aa).

Residues 150–151 (GT) and Q274 contribute to the pyridoxal 5'-phosphate site. Position 300 is an N6-(pyridoxal phosphate)lysine (K300). Pyridoxal 5'-phosphate is bound at residue T332.

This sequence belongs to the class-III pyridoxal-phosphate-dependent aminotransferase family. Putrescine aminotransferase subfamily. The cofactor is pyridoxal 5'-phosphate.

It catalyses the reaction an alkane-alpha,omega-diamine + 2-oxoglutarate = an omega-aminoaldehyde + L-glutamate. It carries out the reaction putrescine + 2-oxoglutarate = 1-pyrroline + L-glutamate + H2O. The enzyme catalyses cadaverine + 2-oxoglutarate = 5-aminopentanal + L-glutamate. Its pathway is amine and polyamine degradation; putrescine degradation; 4-aminobutanal from putrescine (transaminase route): step 1/1. In terms of biological role, catalyzes the aminotransferase reaction from putrescine to 2-oxoglutarate, leading to glutamate and 4-aminobutanal, which spontaneously cyclizes to form 1-pyrroline. This is the first step in one of two pathways for putrescine degradation, where putrescine is converted into 4-aminobutanoate (gamma-aminobutyrate or GABA) via 4-aminobutanal. Also functions as a cadaverine transaminase in a a L-lysine degradation pathway to succinate that proceeds via cadaverine, glutarate and L-2-hydroxyglutarate. The sequence is that of Putrescine aminotransferase from Salmonella dublin (strain CT_02021853).